Consider the following 327-residue polypeptide: o-succinylbenzoate synthase (327 aa).

The Proton donor role is filled by lysine 110. Mg(2+) is bound by residues aspartate 138, glutamate 165, and aspartate 188. Residue lysine 212 is the Proton acceptor of the active site.

Belongs to the mandelate racemase/muconate lactonizing enzyme family. MenC type 1 subfamily. A divalent metal cation serves as cofactor.

It carries out the reaction (1R,6R)-6-hydroxy-2-succinyl-cyclohexa-2,4-diene-1-carboxylate = 2-succinylbenzoate + H2O. Its pathway is quinol/quinone metabolism; 1,4-dihydroxy-2-naphthoate biosynthesis; 1,4-dihydroxy-2-naphthoate from chorismate: step 4/7. It functions in the pathway quinol/quinone metabolism; menaquinone biosynthesis. In terms of biological role, converts 2-succinyl-6-hydroxy-2,4-cyclohexadiene-1-carboxylate (SHCHC) to 2-succinylbenzoate (OSB). The polypeptide is o-succinylbenzoate synthase (Mycobacterium ulcerans (strain Agy99)).